The following is a 976-amino-acid chain: Ephrin type-B receptor 4b (976 aa).

An N-terminal signal peptide occupies residues 1-23 (MDRVCWIMALSWFWMVSTGLVSA). The Extracellular portion of the chain corresponds to 24-541 (EEEVLMNTKL…ESPSRLMLTG (518 aa)). The Eph LBD domain occupies 25–204 (EEVLMNTKLE…FFKKCPAVSR (180 aa)). Disulfide bonds link cysteine 69–cysteine 186 and cysteine 103–cysteine 113. Fibronectin type-III domains are found at residues 326–434 (PPSA…TSRD) and 438–529 (PVSG…TLPD). Residues 542–562 (VLVAIGLLILIAVVIVAVFCF) form a helical membrane-spanning segment. At 563 to 976 (RRSTRRRDPD…LRIHGGSLRY (414 aa)) the chain is on the cytoplasmic side. One can recognise a Protein kinase domain in the interval 613–897 (VKIEEVIGAG…IPDGPSHPLL (285 aa)). ATP-binding positions include 619 to 627 (IGAGEFGEV) and lysine 645. Catalysis depends on aspartate 738, which acts as the Proton acceptor. In terms of domain architecture, SAM spans 906 to 970 (SHCSSVADWL…LSSVQTLRIH (65 aa)).

This sequence belongs to the protein kinase superfamily. Tyr protein kinase family. Ephrin receptor subfamily.

It is found in the cell membrane. It carries out the reaction L-tyrosyl-[protein] + ATP = O-phospho-L-tyrosyl-[protein] + ADP + H(+). Receptor tyrosine kinase which binds promiscuously transmembrane ephrin-B family ligands residing on adjacent cells, leading to contact-dependent bidirectional signaling into neighboring cells. The signaling pathway downstream of the receptor is referred to as forward signaling while the signaling pathway downstream of the ephrin ligand is referred to as reverse signaling. Together with its cognate ligand/functional ligand EFNB2 is involved in the regulation of cell adhesion and cell migration, and plays a central role in heart morphogenesis, angiogenesis and blood vessel remodeling and permeability. EPHB4-mediated forward signaling controls cellular repulsion and segregation from EFNB2-expressing cells. Involved in somitogenesis. The polypeptide is Ephrin type-B receptor 4b (Danio rerio (Zebrafish)).